Here is a 98-residue protein sequence, read N- to C-terminus: MSLVYMNIMTAFMVALAGLLMYRSHLMSSLLCLEGMMLSLFVMASLTILNSHFTLASMMPIILLVFAACEAALGLSLLVKVSNTYGTDYVQNLNLLQC.

A run of 3 helical transmembrane segments spans residues 1 to 21 (MSLVYMNIMTAFMVALAGLLM), 29 to 49 (SLLCLEGMMLSLFVMASLTIL), and 59 to 79 (MPIILLVFAACEAALGLSLLV).

This sequence belongs to the complex I subunit 4L family. As to quaternary structure, core subunit of respiratory chain NADH dehydrogenase (Complex I) which is composed of 45 different subunits.

Its subcellular location is the mitochondrion inner membrane. The enzyme catalyses a ubiquinone + NADH + 5 H(+)(in) = a ubiquinol + NAD(+) + 4 H(+)(out). Its function is as follows. Core subunit of the mitochondrial membrane respiratory chain NADH dehydrogenase (Complex I) which catalyzes electron transfer from NADH through the respiratory chain, using ubiquinone as an electron acceptor. Part of the enzyme membrane arm which is embedded in the lipid bilayer and involved in proton translocation. The chain is NADH-ubiquinone oxidoreductase chain 4L (MT-ND4L) from Cervus elaphus (Red deer).